The sequence spans 169 residues: Large ribosomal subunit protein uL10 (169 aa).

This sequence belongs to the universal ribosomal protein uL10 family. As to quaternary structure, part of the ribosomal stalk of the 50S ribosomal subunit. The N-terminus interacts with L11 and the large rRNA to form the base of the stalk. The C-terminus forms an elongated spine to which L12 dimers bind in a sequential fashion forming a multimeric L10(L12)X complex.

Functionally, forms part of the ribosomal stalk, playing a central role in the interaction of the ribosome with GTP-bound translation factors. This is Large ribosomal subunit protein uL10 from Rickettsia rickettsii (strain Iowa).